The primary structure comprises 447 residues: ATP-dependent protease ATPase subunit HslU (447 aa).

ATP contacts are provided by residues I17, 59-64 (GVGKTE), D256, E321, and R393.

This sequence belongs to the ClpX chaperone family. HslU subfamily. In terms of assembly, a double ring-shaped homohexamer of HslV is capped on each side by a ring-shaped HslU homohexamer. The assembly of the HslU/HslV complex is dependent on binding of ATP.

It is found in the cytoplasm. ATPase subunit of a proteasome-like degradation complex; this subunit has chaperone activity. The binding of ATP and its subsequent hydrolysis by HslU are essential for unfolding of protein substrates subsequently hydrolyzed by HslV. HslU recognizes the N-terminal part of its protein substrates and unfolds these before they are guided to HslV for hydrolysis. This Stutzerimonas stutzeri (strain A1501) (Pseudomonas stutzeri) protein is ATP-dependent protease ATPase subunit HslU.